The primary structure comprises 444 residues: UDP-N-acetylmuramoylalanine--D-glutamate ligase (444 aa).

Glycine 109–threonine 115 contacts ATP.

The protein belongs to the MurCDEF family.

It is found in the cytoplasm. The catalysed reaction is UDP-N-acetyl-alpha-D-muramoyl-L-alanine + D-glutamate + ATP = UDP-N-acetyl-alpha-D-muramoyl-L-alanyl-D-glutamate + ADP + phosphate + H(+). The protein operates within cell wall biogenesis; peptidoglycan biosynthesis. Its function is as follows. Cell wall formation. Catalyzes the addition of glutamate to the nucleotide precursor UDP-N-acetylmuramoyl-L-alanine (UMA). In Bacteroides fragilis (strain ATCC 25285 / DSM 2151 / CCUG 4856 / JCM 11019 / LMG 10263 / NCTC 9343 / Onslow / VPI 2553 / EN-2), this protein is UDP-N-acetylmuramoylalanine--D-glutamate ligase.